Reading from the N-terminus, the 446-residue chain is Phosphoglucosamine mutase (446 aa).

Residue serine 103 is the Phosphoserine intermediate of the active site. Positions 103, 242, 244, and 246 each coordinate Mg(2+). Serine 103 carries the post-translational modification Phosphoserine.

The protein belongs to the phosphohexose mutase family. The cofactor is Mg(2+). Post-translationally, activated by phosphorylation.

It catalyses the reaction alpha-D-glucosamine 1-phosphate = D-glucosamine 6-phosphate. Functionally, catalyzes the conversion of glucosamine-6-phosphate to glucosamine-1-phosphate. The polypeptide is Phosphoglucosamine mutase (Vibrio atlanticus (strain LGP32) (Vibrio splendidus (strain Mel32))).